The primary structure comprises 147 residues: Small ribosomal subunit protein uS5 (147 aa).

The S5 DRBM domain maps to 9–72; the sequence is FQEVVVNIGR…DDAFKNLIHV (64 aa).

The protein belongs to the universal ribosomal protein uS5 family. In terms of assembly, part of the 30S ribosomal subunit. Contacts proteins S4 and S8.

Its function is as follows. With S4 and S12 plays an important role in translational accuracy. Functionally, located at the back of the 30S subunit body where it stabilizes the conformation of the head with respect to the body. The polypeptide is Small ribosomal subunit protein uS5 (Helicobacter pylori (strain J99 / ATCC 700824) (Campylobacter pylori J99)).